The primary structure comprises 205 residues: MIGKLKGLIDSYGEDYVILDVQGVGYQVHCASRTLQALPQAGEAAVLSIETYVREDQIKLFGFRSDLEREWFRLLQTVQGVGAKVALSVLSTLPPSDLADAIALRDKAAVARTPGVGPKVAERIVTELKDKAPGFASVDPAVAHLSGAIEERSAPRPVADAISALVNLGYGQPQAAAAIAAAARSAGDAAQTAQLIKLGLKELSK.

The tract at residues 1 to 64 is domain I; that stretch reads MIGKLKGLID…EDQIKLFGFR (64 aa). Residues 65 to 143 are domain II; it reads SDLEREWFRL…GFASVDPAVA (79 aa). A flexible linker region spans residues 144–153; the sequence is HLSGAIEERS. Residues 153 to 205 are domain III; the sequence is SAPRPVADAISALVNLGYGQPQAAAAIAAAARSAGDAAQTAQLIKLGLKELSK.

It belongs to the RuvA family. Homotetramer. Forms an RuvA(8)-RuvB(12)-Holliday junction (HJ) complex. HJ DNA is sandwiched between 2 RuvA tetramers; dsDNA enters through RuvA and exits via RuvB. An RuvB hexamer assembles on each DNA strand where it exits the tetramer. Each RuvB hexamer is contacted by two RuvA subunits (via domain III) on 2 adjacent RuvB subunits; this complex drives branch migration. In the full resolvosome a probable DNA-RuvA(4)-RuvB(12)-RuvC(2) complex forms which resolves the HJ.

The protein localises to the cytoplasm. In terms of biological role, the RuvA-RuvB-RuvC complex processes Holliday junction (HJ) DNA during genetic recombination and DNA repair, while the RuvA-RuvB complex plays an important role in the rescue of blocked DNA replication forks via replication fork reversal (RFR). RuvA specifically binds to HJ cruciform DNA, conferring on it an open structure. The RuvB hexamer acts as an ATP-dependent pump, pulling dsDNA into and through the RuvAB complex. HJ branch migration allows RuvC to scan DNA until it finds its consensus sequence, where it cleaves and resolves the cruciform DNA. This chain is Holliday junction branch migration complex subunit RuvA, found in Rhodopseudomonas palustris (strain BisA53).